The primary structure comprises 57 residues: Catalase-1 (57 aa).

Residue tyrosine 37 coordinates heme.

In terms of assembly, homodimer. The cofactor is heme.

The enzyme catalyses 2 H2O2 = O2 + 2 H2O. Decomposes hydrogen peroxide into water and oxygen; serves to protect cells from the toxic effects of hydrogen peroxide. The chain is Catalase-1 from Comamonas terrigena.